The sequence spans 141 residues: MAKKITALIKLALPAGKATPAPPVGPALGQHGVNIAAFCKEYNAKTTDKTGLIIPVEISVYEDRSYTFILKTPPASVLLANAAKIKKGSSTPNRVNVGSITKSQLEEIASIKLPDLNTTKISSAMKIVEGTARNMGISIVD.

The protein belongs to the universal ribosomal protein uL11 family. As to quaternary structure, part of the ribosomal stalk of the 50S ribosomal subunit. Interacts with L10 and the large rRNA to form the base of the stalk. L10 forms an elongated spine to which L12 dimers bind in a sequential fashion forming a multimeric L10(L12)X complex.

The protein resides in the plastid. It is found in the chloroplast. Forms part of the ribosomal stalk which helps the ribosome interact with GTP-bound translation factors. This Trieres chinensis (Marine centric diatom) protein is Large ribosomal subunit protein uL11c.